The following is a 51-amino-acid chain: Non-specific lipid-transfer protein (51 aa).

This sequence belongs to the plant LTP family.

Functionally, plant non-specific lipid-transfer proteins transfer phospholipids as well as galactolipids across membranes. May play a role in wax or cutin deposition in the cell walls of expanding epidermal cells and certain secretory tissues. The chain is Non-specific lipid-transfer protein from Lycium barbarum (Barbary matrimony-vine).